The sequence spans 165 residues: Phosphopantetheine adenylyltransferase (165 aa).

Residue T10 participates in substrate binding. ATP is bound by residues 10 to 11 (TF) and H18. K42, L75, and R89 together coordinate substrate. ATP-binding positions include 90 to 92 (GVR), E100, and 125 to 131 (VSFISSS).

This sequence belongs to the bacterial CoaD family. As to quaternary structure, homohexamer. It depends on Mg(2+) as a cofactor.

The protein resides in the cytoplasm. It carries out the reaction (R)-4'-phosphopantetheine + ATP + H(+) = 3'-dephospho-CoA + diphosphate. It participates in cofactor biosynthesis; coenzyme A biosynthesis; CoA from (R)-pantothenate: step 4/5. Functionally, reversibly transfers an adenylyl group from ATP to 4'-phosphopantetheine, yielding dephospho-CoA (dPCoA) and pyrophosphate. The chain is Phosphopantetheine adenylyltransferase from Buchnera aphidicola subsp. Acyrthosiphon pisum (strain 5A).